A 192-amino-acid chain; its full sequence is uncharacterized protein (192 aa).

This is an uncharacterized protein from Aquifex aeolicus (strain VF5).